Consider the following 480-residue polypeptide: Glutamate--tRNA ligase 2 (480 aa).

Residues 15–25 (PSPTGYLHVGG) carry the 'HIGH' region motif. The short motif at 248 to 252 (RLSKR) is the 'KMSKS' region element. Lys-251 contributes to the ATP binding site.

It belongs to the class-I aminoacyl-tRNA synthetase family. Glutamate--tRNA ligase type 1 subfamily. In terms of assembly, monomer.

The protein localises to the cytoplasm. The catalysed reaction is tRNA(Glu) + L-glutamate + ATP = L-glutamyl-tRNA(Glu) + AMP + diphosphate. Its function is as follows. Catalyzes the attachment of glutamate to tRNA(Glu) in a two-step reaction: glutamate is first activated by ATP to form Glu-AMP and then transferred to the acceptor end of tRNA(Glu). In Koribacter versatilis (strain Ellin345), this protein is Glutamate--tRNA ligase 2.